A 618-amino-acid polypeptide reads, in one-letter code: Matrix metalloproteinase-24 (618 aa).

The signal sequence occupies residues 1-41 (MPRSRGGRAAPGQAARWSGWRAPGRLLPLLPALCCLAAAAG). A propeptide spanning residues 42-128 (AGKPAGADAP…HLSRRRRNKR (87 aa)) is cleaved from the precursor. Over 42 to 575 (AGKPAGADAP…IDDVPGSVNA (534 aa)) the chain is Extracellular. The Cysteine switch signature appears at 110 to 117 (PRCGVPDH). Residues Cys-112 and His-255 each contribute to the Zn(2+) site. Glu-256 is an active-site residue. His-259 and His-265 together coordinate Zn(2+). The interval 296–352 (QKIYGPPAEPLEPTRPLPTLPVRRIHSPSERKHERQPRPPRPPLGDRPSTPGAKPNI) is disordered. Over residues 302 to 314 (PAEPLEPTRPLPT) the composition is skewed to pro residues. Residues 322 to 332 (SPSERKHERQP) show a composition bias toward basic and acidic residues. Hemopexin repeat units lie at residues 350 to 398 (PNIC…WKGL), 399 to 444 (PARI…GSCL), 446 to 494 (REGI…KGIP), and 495 to 542 (QAPQ…WMGC). Cys-353 and Cys-542 are oxidised to a cystine. The chain crosses the membrane as a helical span at residues 576–596 (VAVVVPCTLSLCLLVLLYTIF). Topologically, residues 597–618 (QFKNKTGPQPVTYYKRPVQEWV) are cytoplasmic. The PDZ-binding motif lies at 616 to 618 (EWV).

It belongs to the peptidase M10A family. As to quaternary structure, interacts (via PDZ-binding motif) with APBA3 (via PDZ domain). Interacts with GRIP1 and GRIP2. It depends on Zn(2+) as a cofactor. Requires Ca(2+) as cofactor. Cleaved by a furin endopeptidase in the trans-Golgi network. As to expression, predominantly expressed in the nervous system: while enriched in the central nervous system, expression is also detected in the peripheral nervous system, including the trigeminal ganglion. Expression is not restricted to the nervous system: it is also enriched in the thymus, with a lower level of expression present in the aorta. In brain, high expression is present in the brain parenchyma, particularly within the neocortex.

It localises to the cell membrane. It is found in the golgi apparatus. The protein localises to the trans-Golgi network membrane. Its subcellular location is the secreted. The protein resides in the extracellular space. It localises to the extracellular matrix. Functionally, metalloprotease that mediates cleavage of N-cadherin (CDH2) and acts as a regulator of neuro-immune interactions and neural stem cell quiescence. Involved in cell-cell interactions between nociceptive neurites and mast cells, possibly by mediating cleavage of CDH2, thereby acting as a mediator of peripheral thermal nociception and inflammatory hyperalgesia. Key regulator of neural stem cells quiescence by mediating cleavage of CDH2, affecting CDH2-mediated anchorage of neural stem cells to ependymocytes in the adult subependymal zone, leading to modulate their quiescence. May play a role in axonal growth. Able to activate progelatinase A. May also be a proteoglycanase involved in degradation of proteoglycans, such as dermatan sulfate and chondroitin sulfate proteoglycans. Cleaves partially fibronectin, but not collagen type I, nor laminin. The protein is Matrix metalloproteinase-24 (Mmp24) of Rattus norvegicus (Rat).